A 185-amino-acid chain; its full sequence is Ribosome-recycling factor (185 aa).

The interval 136 to 159 (NEQLKSQQKDGKMSEDELKRSQDE) is disordered.

This sequence belongs to the RRF family.

The protein resides in the cytoplasm. Responsible for the release of ribosomes from messenger RNA at the termination of protein biosynthesis. May increase the efficiency of translation by recycling ribosomes from one round of translation to another. This is Ribosome-recycling factor from Pelotomaculum thermopropionicum (strain DSM 13744 / JCM 10971 / SI).